The primary structure comprises 127 residues: Putative pre-16S rRNA nuclease (127 aa).

It belongs to the YqgF nuclease family.

The protein resides in the cytoplasm. In terms of biological role, could be a nuclease involved in processing of the 5'-end of pre-16S rRNA. The protein is Putative pre-16S rRNA nuclease of Campylobacter jejuni subsp. jejuni serotype O:6 (strain 81116 / NCTC 11828).